The following is a 483-amino-acid chain: SWI/SNF-related matrix-associated actin-dependent regulator of chromatin subfamily D member 3 (483 aa).

N-acetylalanine is present on Ala2. Positions 27-102 (RPGMPSGARM…ARSRSAKRRK (76 aa)) are disordered. The segment covering 78-88 (QSQAQGQGQPV) has biased composition (low complexity). Ser178 is subject to Phosphoserine. Residues 258–335 (YQPPQFKLDP…PQRLTALLLP (78 aa)) form the SWIB/MDM2 domain.

It belongs to the SMARCD family. Component of the multiprotein chromatin-remodeling complexes SWI/SNF: SWI/SNF-A (BAF), SWI/SNF-B (PBAF) and related complexes. The canonical complex contains a catalytic subunit (either SMARCA4/BRG1/BAF190A or SMARCA2/BRM/BAF190B) and at least SMARCE1, ACTL6A/BAF53, SMARCC1/BAF155, SMARCC2/BAF170, and SMARCB1/SNF5/BAF47. Other subunits specific to each of the complexes may also be present permitting several possible combinations developmentally and tissue specific. Component of the BAF complex, which includes at least actin (ACTB), ARID1A/BAF250A, ARID1B/BAF250B, SMARCA2/BRM, SMARCA4/BRG1/BAF190A, ACTL6A/BAF53, ACTL6B/BAF53B, SMARCE1/BAF57, SMARCC1/BAF155, SMARCC2/BAF170, SMARCB1/SNF5/INI1, and one or more SMARCD1/BAF60A, SMARCD2/BAF60B, or SMARCD3/BAF60C. In muscle cells, the BAF complex also contains DPF3. Component of neural progenitors-specific chromatin remodeling complex (npBAF complex) composed of at least, ARID1A/BAF250A or ARID1B/BAF250B, SMARCD1/BAF60A, SMARCD3/BAF60C, SMARCA2/BRM/BAF190B, SMARCA4/BRG1/BAF190A, SMARCB1/BAF47, SMARCC1/BAF155, SMARCE1/BAF57, SMARCC2/BAF170, PHF10/BAF45A, ACTL6A/BAF53A and actin. Component of neuron-specific chromatin remodeling complex (nBAF complex) composed of at least, ARID1A/BAF250A or ARID1B/BAF250B, SMARCD1/BAF60A, SMARCD3/BAF60C, SMARCA2/BRM/BAF190B, SMARCA4/BRG1/BAF190A, SMARCB1/BAF47, SMARCC1/BAF155, SMARCE1/BAF57, SMARCC2/BAF170, DPF1/BAF45B, DPF3/BAF45C, ACTL6B/BAF53B and actin. May be a component of the SWI/SNF-B (PBAF) chromatin remodeling complex, at least composed of SMARCA4/BRG1, SMARCB1/BAF47/SNF5, ACTL6A/BAF53A or ACTL6B/BAF53B, SMARCE1/BAF57, SMARCD1/BAF60A, SMARCD2/BAF60B, perhaps SMARCD3/BAF60C, SMARCC1/BAF155, SMARCC2/BAF170, PBRM1/BAF180, ARID2/BAF200 and actin. Component of SWI/SNF (GBAF) subcomplex, which includes at least BICRA or BICRAL (mutually exclusive), BRD9, SS18, SMARCA2/BRM, SMARCA4/BRG1/BAF190A, ACTL6A/BAF53, SMARCC1/BAF155, and SMARCD1/BAF60A. Interacts with SMARCA4/BRG1/BAF190A. The precise distribution of the related SMARCD1, SMARCD2 and SMARCD3 proteins among these and other SWI/SNF nucleosome-remodeling complexes is not fully known. May allow recruitment of SWI/SNF containing complexes specifically to promoters where these factors are located. Also interacts with several nuclear receptors including PPARG/NR1C3, RXRA/NR1F1, ESR1, NR5A1, NR5A2/LRH1 and other transcriptional activators including the HLH protein SREBF1/SREBP1 and the homeobox protein PBX1. Interacts with PRDM1/BLIMP1. Ubiquitously expressed.

Its subcellular location is the nucleus. Functionally, involved in transcriptional activation and repression of select genes by chromatin remodeling (alteration of DNA-nucleosome topology). Component of SWI/SNF chromatin remodeling complexes that carry out key enzymatic activities, changing chromatin structure by altering DNA-histone contacts within a nucleosome in an ATP-dependent manner. Stimulates nuclear receptor mediated transcription. Belongs to the neural progenitors-specific chromatin remodeling complex (npBAF complex) and the neuron-specific chromatin remodeling complex (nBAF complex). During neural development a switch from a stem/progenitor to a postmitotic chromatin remodeling mechanism occurs as neurons exit the cell cycle and become committed to their adult state. The transition from proliferating neural stem/progenitor cells to postmitotic neurons requires a switch in subunit composition of the npBAF and nBAF complexes. As neural progenitors exit mitosis and differentiate into neurons, npBAF complexes which contain ACTL6A/BAF53A and PHF10/BAF45A, are exchanged for homologous alternative ACTL6B/BAF53B and DPF1/BAF45B or DPF3/BAF45C subunits in neuron-specific complexes (nBAF). The npBAF complex is essential for the self-renewal/proliferative capacity of the multipotent neural stem cells. The nBAF complex along with CREST plays a role regulating the activity of genes essential for dendrite growth. The chain is SWI/SNF-related matrix-associated actin-dependent regulator of chromatin subfamily D member 3 (Smarcd3) from Mus musculus (Mouse).